An 82-amino-acid polypeptide reads, in one-letter code: RNA-binding protein KhpA (82 aa).

The 48-residue stretch at 35–82 folds into the KH domain; it reads STILELRVSQSDVGKIIGRRGRIARAIRTLLGACAAKTNRRVQLEILD.

Belongs to the KhpA RNA-binding protein family. In terms of assembly, forms a complex with KhpB.

It is found in the cytoplasm. Its function is as follows. A probable RNA chaperone. Forms a complex with KhpB which binds to cellular RNA and controls its expression. Plays a role in peptidoglycan (PG) homeostasis and cell length regulation. In Borreliella burgdorferi (strain ATCC 35210 / DSM 4680 / CIP 102532 / B31) (Borrelia burgdorferi), this protein is RNA-binding protein KhpA.